A 359-amino-acid chain; its full sequence is 3-dehydroquinate synthase (359 aa).

NAD(+) contacts are provided by residues 71–76 (DGEQFK), 105–109 (GVIGD), 129–130 (TT), lysine 142, lysine 151, and 169–172 (CLHT). Glutamate 184, histidine 247, and histidine 264 together coordinate Zn(2+).

Belongs to the sugar phosphate cyclases superfamily. Dehydroquinate synthase family. Co(2+) serves as cofactor. Zn(2+) is required as a cofactor. The cofactor is NAD(+).

It localises to the cytoplasm. The enzyme catalyses 7-phospho-2-dehydro-3-deoxy-D-arabino-heptonate = 3-dehydroquinate + phosphate. The protein operates within metabolic intermediate biosynthesis; chorismate biosynthesis; chorismate from D-erythrose 4-phosphate and phosphoenolpyruvate: step 2/7. Catalyzes the conversion of 3-deoxy-D-arabino-heptulosonate 7-phosphate (DAHP) to dehydroquinate (DHQ). In Shewanella sp. (strain W3-18-1), this protein is 3-dehydroquinate synthase.